Consider the following 274-residue polypeptide: UPF0758 protein RHECIAT_CH0001935 (274 aa).

Positions 1–57 (MAKRPAATSSNDELPFATEEPVADERSFFGGRPQNPTAPNARAALPASLSGPEHYHG) are disordered. The region spanning 152–274 (VLSSWSSVIQ…HVSLKGLKLI (123 aa)) is the MPN domain. Positions 223, 225, and 236 each coordinate Zn(2+). The short motif at 223–236 (HNHPSGDPTPSRAD) is the JAMM motif element.

This sequence belongs to the UPF0758 family.

The protein is UPF0758 protein RHECIAT_CH0001935 of Rhizobium etli (strain CIAT 652).